The chain runs to 475 residues: Ribulose bisphosphate carboxylase large chain (475 aa).

Residues 1-2 (MS) constitute a propeptide that is removed on maturation. Pro-3 is subject to N-acetylproline. The residue at position 14 (Lys-14) is an N6,N6,N6-trimethyllysine. The substrate site is built by Asn-123 and Thr-173. Residue Lys-175 is the Proton acceptor of the active site. A substrate-binding site is contributed by Lys-177. Mg(2+) is bound by residues Lys-201, Asp-203, and Glu-204. Position 201 is an N6-carboxylysine (Lys-201). Catalysis depends on His-294, which acts as the Proton acceptor. Substrate-binding residues include Arg-295, His-327, and Ser-379.

The protein belongs to the RuBisCO large chain family. Type I subfamily. As to quaternary structure, heterohexadecamer of 8 large chains and 8 small chains; disulfide-linked. The disulfide link is formed within the large subunit homodimers. Mg(2+) serves as cofactor. In terms of processing, the disulfide bond which can form in the large chain dimeric partners within the hexadecamer appears to be associated with oxidative stress and protein turnover.

It is found in the plastid. It localises to the chloroplast. The enzyme catalyses 2 (2R)-3-phosphoglycerate + 2 H(+) = D-ribulose 1,5-bisphosphate + CO2 + H2O. The catalysed reaction is D-ribulose 1,5-bisphosphate + O2 = 2-phosphoglycolate + (2R)-3-phosphoglycerate + 2 H(+). Its function is as follows. RuBisCO catalyzes two reactions: the carboxylation of D-ribulose 1,5-bisphosphate, the primary event in carbon dioxide fixation, as well as the oxidative fragmentation of the pentose substrate in the photorespiration process. Both reactions occur simultaneously and in competition at the same active site. This Afrocarpus gracilior (African fern pine) protein is Ribulose bisphosphate carboxylase large chain.